The sequence spans 789 residues: Fibrinogen alpha chain (789 aa).

The N-terminal stretch at 1 to 19 (MLSLRVTCLILSVASTVWT) is a signal peptide. The residue at position 46 (Ser46) is a Phosphoserine. Residues 69–554 (CRMKGLIDEA…GRARARPTRD (486 aa)) are a coiled coil. 2 stretches are compositionally biased toward basic and acidic residues: residues 263–287 (ERPG…RGDF) and 384–396 (KGDK…KEKV). The interval 263–420 (ERPGKDGGSR…TITKTVTGPD (158 aa)) is disordered. Positions 397–416 (TSSGTSTTHRSCSKTITKTV) are enriched in polar residues. Cys408 and Cys438 are disulfide-bonded. Position 447 is a phosphoserine (Ser447). 4-hydroxyproline; by P4HA1 is present on Pro504. Basic and acidic residues predominate over residues 526–541 (ADEAGSEAHREGETRN). The interval 526–555 (ADEAGSEAHREGETRNTKRGRARARPTRDC) is disordered. Residues 546–787 (RARARPTRDC…AVRMKIRPLV (242 aa)) form the Fibrinogen C-terminal domain. N-linked (GlcNAc...) asparagine glycosylation is present at Asn609. The Ca(2+) site is built by Asp714, Asp716, Trp718, and Glu720. A disulfide bridge connects residues Cys722 and Cys735.

As to quaternary structure, heterohexamer; disulfide linked. Contains 2 sets of 3 non-identical chains (alpha, beta and gamma). The 2 heterotrimers are in head to head conformation with the N-termini in a small central domain. Conversion of fibrinogen to fibrin is triggered by thrombin, which cleaves fibrinopeptides A and B from alpha and beta chains, and thus exposes the N-terminal polymerization sites responsible for the formation of the soft clot. The soft clot is converted into the hard clot by factor XIIIA which catalyzes the epsilon-(gamma-glutamyl)lysine cross-linking between gamma chains (stronger) and between alpha chains (weaker) of different monomers. Post-translationally, forms F13A-mediated cross-links between a glutamine and the epsilon-amino group of a lysine residue, forming fibronectin-fibrinogen heteropolymers. In terms of processing, phosphorylated by FAM20C in the extracellular medium. As to expression, expressed in liver.

It localises to the secreted. Its function is as follows. Cleaved by the protease thrombin to yield monomers which, together with fibrinogen beta (FGB) and fibrinogen gamma (FGG), polymerize to form an insoluble fibrin matrix. Fibrin has a major function in hemostasis as one of the primary components of blood clots. In addition, functions during the early stages of wound repair to stabilize the lesion and guide cell migration during re-epithelialization. Was originally thought to be essential for platelet aggregation, based on in vitro studies using anticoagulated blood. However, subsequent studies have shown that it is not absolutely required for thrombus formation in vivo. Enhances expression of SELP in activated platelets via an ITGB3-dependent pathway. Maternal fibrinogen is essential for successful pregnancy. Fibrin deposition is also associated with infection, where it protects against IFNG-mediated hemorrhage. May also facilitate the immune response via both innate and T-cell mediated pathways. The sequence is that of Fibrinogen alpha chain from Mus musculus (Mouse).